The sequence spans 715 residues: Fatty acid oxidation complex subunit alpha (715 aa).

The enoyl-CoA hydratase stretch occupies residues 1-190 (MTTTSAFMLN…KAGLVDDVVP (190 aa)). The 3-hydroxyacyl-CoA dehydrogenase stretch occupies residues 306–714 (GPLNSVGILG…FWTNGETDQG (409 aa)).

It in the N-terminal section; belongs to the enoyl-CoA hydratase/isomerase family. The protein in the central section; belongs to the 3-hydroxyacyl-CoA dehydrogenase family. As to quaternary structure, heterotetramer of two alpha chains (FadJ) and two beta chains (FadI).

The protein localises to the cytoplasm. It catalyses the reaction a (3S)-3-hydroxyacyl-CoA = a (2E)-enoyl-CoA + H2O. It carries out the reaction a 4-saturated-(3S)-3-hydroxyacyl-CoA = a (3E)-enoyl-CoA + H2O. The catalysed reaction is a (3S)-3-hydroxyacyl-CoA + NAD(+) = a 3-oxoacyl-CoA + NADH + H(+). The enzyme catalyses (3S)-3-hydroxybutanoyl-CoA = (3R)-3-hydroxybutanoyl-CoA. The protein operates within lipid metabolism; fatty acid beta-oxidation. Its function is as follows. Catalyzes the formation of a hydroxyacyl-CoA by addition of water on enoyl-CoA. Also exhibits 3-hydroxyacyl-CoA epimerase and 3-hydroxyacyl-CoA dehydrogenase activities. The protein is Fatty acid oxidation complex subunit alpha of Salmonella choleraesuis (strain SC-B67).